Consider the following 94-residue polypeptide: Evasin P1086 (94 aa).

A signal peptide spans 1–28 (MAFNVITFLQLAVFVVILFNINLHSASA). 3 cysteine pairs are disulfide-bonded: cysteine 48-cysteine 67, cysteine 52-cysteine 69, and cysteine 63-cysteine 80. N-linked (GlcNAc...) asparagine glycosylation occurs at asparagine 74.

It is found in the secreted. In terms of biological role, salivary chemokine-binding protein which binds to host chemokines CXCL1, CXCL2, CXCL3, CXCL5, CXCL6, CXCL10, CXCL12 and CXCL13. The polypeptide is Evasin P1086 (Ixodes ricinus (Common tick)).